Reading from the N-terminus, the 501-residue chain is Glutamate--tRNA ligase (501 aa).

The 'HIGH' region signature appears at 21 to 31 (PSPTGTPHVGL). The 'KMSKS' region signature appears at 266–270 (KLSKR). Position 269 (Lys-269) interacts with ATP.

It belongs to the class-I aminoacyl-tRNA synthetase family. Glutamate--tRNA ligase type 1 subfamily. As to quaternary structure, monomer.

The protein localises to the cytoplasm. The enzyme catalyses tRNA(Glu) + L-glutamate + ATP = L-glutamyl-tRNA(Glu) + AMP + diphosphate. Functionally, catalyzes the attachment of glutamate to tRNA(Glu) in a two-step reaction: glutamate is first activated by ATP to form Glu-AMP and then transferred to the acceptor end of tRNA(Glu). This Kineococcus radiotolerans (strain ATCC BAA-149 / DSM 14245 / SRS30216) protein is Glutamate--tRNA ligase.